Reading from the N-terminus, the 341-residue chain is Eukaryotic translation initiation factor 2 subunit 1 (341 aa).

The S1 motif domain occupies 16–87 (EDVVMVNVLS…EKGYIDLSKR (72 aa)). Position 51 is a phosphoserine (serine 51). The interval 293 to 341 (AENAQVAGDDDEEDGADQEGMQFDPEKEFNHKGSGAGRANEEDEEEEED) is disordered. Residues 300 to 309 (GDDDEEDGAD) show a composition bias toward acidic residues.

The protein belongs to the eIF-2-alpha family. Eukaryotic translation initiation factor 2 eIF2 is a heterotrimeric complex composed of an alpha, a beta and a gamma subunit. Phosphorylation of eIF-2-alpha impairs the recycling of eIF-2 between successive rounds of initiation and thus leads to inhibition of translation.

Its subcellular location is the cytoplasm. The protein resides in the cytosol. Functionally, eIF-2 functions in the early steps of protein synthesis by forming a ternary complex with GTP and initiator tRNA. This pre-initiation complex mediates ribosomal recognition of a start codon during the scanning process of the leader region. The sequence is that of Eukaryotic translation initiation factor 2 subunit 1 from Drosophila melanogaster (Fruit fly).